The primary structure comprises 100 residues: CCAAT/enhancer-binding protein homolog 2 (100 aa).

2 disordered regions span residues 1 to 60 and 79 to 100; these read MSGN…ETLE and AYAK…SSAV. In terms of domain architecture, bZIP spans 17–80; the sequence is EDDYSTKRKR…SFLKEMFMAY (64 aa). The segment at 23–48 is basic motif; it reads KRKRNNEAVNRTRQKKRQEENDTAEK. Residues 24 to 83 adopt a coiled-coil conformation; it reads RKRNNEAVNRTRQKKRQEENDTAEKVDELKKENETLERKVEQLQKELSFLKEMFMAYAKN. Basic and acidic residues predominate over residues 39 to 60; sequence RQEENDTAEKVDELKKENETLE. The segment at 52 to 73 is leucine-zipper; sequence LKKENETLERKVEQLQKELSFL. A compositionally biased stretch (pro residues) spans 88–100; that stretch reads GPPPPPPPSSSAV.

It belongs to the bZIP family. C/EBP subfamily. In terms of assembly, interacts with transcription factor zip-11. As to expression, expressed broadly in somatic tissues including the intestine.

It localises to the nucleus. Functionally, transcription factor that binds to the promoter and the enhancer regions of target genes. Regulates expression of genes involved in fat metabolism, including ech-1.1 and fat-5. Has a protective role in response to infection by the Gram-negative bacterium P.aeruginosa. Required for the activation of infection response gene irg-1 following P.aeruginosa infection. Required to prevent P.aeruginosa ToxA-mediated lethality. May also function in concert with transcription factor zip-11 to mediate immune responses, independently of the pmk-1/p38 MAPK pathway. May act together with the bZIP transcription factor, zip-2. The protein is CCAAT/enhancer-binding protein homolog 2 of Caenorhabditis elegans.